The chain runs to 577 residues: Arginine--tRNA ligase (577 aa).

The 'HIGH' region signature appears at 122 to 132 (PNVAKEMHVGH).

This sequence belongs to the class-I aminoacyl-tRNA synthetase family. Monomer.

The protein resides in the cytoplasm. It catalyses the reaction tRNA(Arg) + L-arginine + ATP = L-arginyl-tRNA(Arg) + AMP + diphosphate. The sequence is that of Arginine--tRNA ligase from Escherichia coli O81 (strain ED1a).